Reading from the N-terminus, the 471-residue chain is Ubiquitin carboxyl-terminal hydrolase calypso (471 aa).

In terms of domain architecture, UCH catalytic spans 45 to 276 (GWLELESDPG…IRFNLMAVVP (232 aa)). The active-site Nucleophile is Cys-131. His-213 serves as the catalytic Proton donor. Positions 375–403 (NYDKFICTFLSMLAHQGVLGELVSQHLLP) constitute a ULD domain. A positively charged C-terminal tail required for binding nucleosomes region spans residues 405–471 (KKVSGQGAAN…KGRNKCRKRK (67 aa)). A disordered region spans residues 410-471 (QGAANRISKQ…KGRNKCRKRK (62 aa)). The span at 420-447 (STTASAGGSTTGATASTPKTQQQQAAAA) shows a compositional bias: low complexity. Positions 457 to 471 (PGRRRKGRNKCRKRK) are enriched in basic residues.

The protein belongs to the peptidase C12 family. BAP1 subfamily. Catalytic component of the polycomb repressive deubiquitinase (PR-DUB) complex, at least composed of caly/calypso, Asx and sba (MBD5/6 homolog). The PR-DUB complex associates with nucleosomes to mediate deubiquitination of histone H2AK118ub1 substrates; the association requires the positively charged C-terminal tail of caly, probably due to direct binding of DNA. Interacts (via ULD domain) with Asx (via DEUBAD domain); the interaction produces a stable heterodimer with a composite binding site for ubiquitin. Homodimerizes (via coiled-coil hinge-region between the UCH and ULD domains) to mediate assembly of 2 copies of the caly-Asx heterodimer into a bisymmetric tetramer; dimerization enhances PR-DUB association with nucleosomes.

It is found in the nucleus. The catalysed reaction is Thiol-dependent hydrolysis of ester, thioester, amide, peptide and isopeptide bonds formed by the C-terminal Gly of ubiquitin (a 76-residue protein attached to proteins as an intracellular targeting signal).. In terms of biological role, catalytic component of the polycomb repressive deubiquitinase (PR-DUB) complex, a complex that specifically mediates deubiquitination of histone H2A monoubiquitinated at 'Lys-119' (H2AK118ub1). Mediates bisymmetric organization of the PR-DUB complex and is involved in association with nucleosomes to mediate deubiquitination. Does not deubiquitinate monoubiquitinated histone H2B. Required to maintain the transcriptionally repressive state of homeotic genes throughout development. The PR-DUB complex has weak or no activity toward 'Lys-48'- and 'Lys-63'-linked polyubiquitin chains. Polycomb group (PcG) protein. The chain is Ubiquitin carboxyl-terminal hydrolase calypso from Drosophila yakuba (Fruit fly).